We begin with the raw amino-acid sequence, 88 residues long: Putative membrane protein insertion efficiency factor (88 aa).

This sequence belongs to the UPF0161 family.

The protein localises to the cell inner membrane. Its function is as follows. Could be involved in insertion of integral membrane proteins into the membrane. This Burkholderia vietnamiensis (strain G4 / LMG 22486) (Burkholderia cepacia (strain R1808)) protein is Putative membrane protein insertion efficiency factor.